The primary structure comprises 112 residues: FK506-binding protein 1A (112 aa).

The PPIase FKBP-type domain maps to 20–108 (GDFVTIHYTG…IFEVELLGIN (89 aa)).

It belongs to the FKBP-type PPIase family. FKBP1 subfamily.

It localises to the cytoplasm. The catalysed reaction is [protein]-peptidylproline (omega=180) = [protein]-peptidylproline (omega=0). Its activity is regulated as follows. Inhibited by both FK506 and rapamycin. Functionally, PPIases accelerate the folding of proteins. It catalyzes the cis-trans isomerization of proline imidic peptide bonds in oligopeptides. This Aspergillus fumigatus (strain ATCC MYA-4609 / CBS 101355 / FGSC A1100 / Af293) (Neosartorya fumigata) protein is FK506-binding protein 1A (fpr1A).